A 293-amino-acid chain; its full sequence is Cytidine deaminase (293 aa).

CMP/dCMP-type deaminase domains follow at residues E47–A166 and E186–V293. N88–E90 is a binding site for substrate. H101 is a Zn(2+) binding site. The active-site Proton donor is the E103. Positions 128 and 131 each coordinate Zn(2+).

It belongs to the cytidine and deoxycytidylate deaminase family. In terms of assembly, homodimer. It depends on Zn(2+) as a cofactor.

The enzyme catalyses cytidine + H2O + H(+) = uridine + NH4(+). It catalyses the reaction 2'-deoxycytidine + H2O + H(+) = 2'-deoxyuridine + NH4(+). This enzyme scavenges exogenous and endogenous cytidine and 2'-deoxycytidine for UMP synthesis. The protein is Cytidine deaminase of Aeromonas salmonicida (strain A449).